A 427-amino-acid chain; its full sequence is SAC3 domain-containing protein 1 (427 aa).

Composition is skewed to basic and acidic residues over residues 1–10 (MGRFKGENRS) and 117–127 (ADPKRTVKEYS). Disordered stretches follow at residues 1–53 (MGRF…QDAV) and 101–143 (LHRL…LLRP). Residues 134 to 143 (PRPPPSLLRP) show a composition bias toward pro residues. A PCI domain is found at 229-397 (QVQEGFGSLR…EGLPPPGAYH (169 aa)). At serine 425 the chain carries Phosphoserine.

This sequence belongs to the SAC3 family. In terms of assembly, may be part of a SEM1-containing complex. As to expression, present in spleen cells (at protein level).

The protein localises to the cytoplasm. Its subcellular location is the cytoskeleton. It localises to the microtubule organizing center. The protein resides in the centrosome. It is found in the spindle. Its function is as follows. Involved in centrosome duplication and mitotic progression. The chain is SAC3 domain-containing protein 1 (Sac3d1) from Mus musculus (Mouse).